The sequence spans 188 residues: MIFKDYDFLQNYDLKNFGEKVKIYKELLSKFNRIHNLTHLKNIDENIFDSIKILDFYDFSKAKNIADIGSGAGFPAVFLAFLLQSNFHLFEPNPKKTAFLRTLKIECELSNLHIYKEKVQEYKNTFKADIITSRALMDIKPLLEICTNLKDENTVFILWKGSEIYQELENIKDYEIFENNLRKYCIVK.

S-adenosyl-L-methionine-binding positions include glycine 69, phenylalanine 74, 119 to 120, and arginine 134; that span reads VQ.

It belongs to the methyltransferase superfamily. RNA methyltransferase RsmG family.

The protein localises to the cytoplasm. It carries out the reaction guanosine(527) in 16S rRNA + S-adenosyl-L-methionine = N(7)-methylguanosine(527) in 16S rRNA + S-adenosyl-L-homocysteine. Functionally, specifically methylates the N7 position of guanine in position 527 of 16S rRNA. This chain is Ribosomal RNA small subunit methyltransferase G, found in Campylobacter jejuni subsp. doylei (strain ATCC BAA-1458 / RM4099 / 269.97).